Reading from the N-terminus, the 512-residue chain is Histidine ammonia-lyase (512 aa).

Residues 142–144 (ASG) constitute a cross-link (5-imidazolinone (Ala-Gly)). The residue at position 143 (serine 143) is a 2,3-didehydroalanine (Ser).

It belongs to the PAL/histidase family. Post-translationally, contains an active site 4-methylidene-imidazol-5-one (MIO), which is formed autocatalytically by cyclization and dehydration of residues Ala-Ser-Gly.

It is found in the cytoplasm. It catalyses the reaction L-histidine = trans-urocanate + NH4(+). It participates in amino-acid degradation; L-histidine degradation into L-glutamate; N-formimidoyl-L-glutamate from L-histidine: step 1/3. The chain is Histidine ammonia-lyase from Bartonella tribocorum (strain CIP 105476 / IBS 506).